Here is a 211-residue protein sequence, read N- to C-terminus: MAKIKLLSIDGNFAKELEVTSDLFVEVPHKQAMFDSVLAENAAERQGTHSTLTKGEVRGGGKKPWRQKHTGKARTGSTRNPHWTGGGVVFGPKPNRNYNLKVNAKVRLLAFKSALTIKLNEGKMLGLVANSDLETPSTKKMVNFINNANLENQKVLLVIADHFSNIKKSTNNLQKVTTKLWYQVSVRDLMHANVVVVAEEAFTNYARKVSK.

The interval 44–90 is disordered; it reads ERQGTHSTLTKGEVRGGGKKPWRQKHTGKARTGSTRNPHWTGGGVVF. Residues 60 to 72 are compositionally biased toward basic residues; sequence GGKKPWRQKHTGK.

Belongs to the universal ribosomal protein uL4 family. Part of the 50S ribosomal subunit.

Its function is as follows. One of the primary rRNA binding proteins, this protein initially binds near the 5'-end of the 23S rRNA. It is important during the early stages of 50S assembly. It makes multiple contacts with different domains of the 23S rRNA in the assembled 50S subunit and ribosome. Functionally, forms part of the polypeptide exit tunnel. This is Large ribosomal subunit protein uL4 from Ureaplasma urealyticum serovar 10 (strain ATCC 33699 / Western).